The chain runs to 186 residues: ATP synthase subunit b (186 aa).

A helical transmembrane segment spans residues 25–45 (IVWSVVCVAIIAVVFYKYVIP).

The protein belongs to the ATPase B chain family. F-type ATPases have 2 components, F(1) - the catalytic core - and F(0) - the membrane proton channel. F(1) has five subunits: alpha(3), beta(3), gamma(1), delta(1), epsilon(1). F(0) has three main subunits: a(1), b(2) and c(10-14). The alpha and beta chains form an alternating ring which encloses part of the gamma chain. F(1) is attached to F(0) by a central stalk formed by the gamma and epsilon chains, while a peripheral stalk is formed by the delta and b chains.

Its subcellular location is the cell membrane. Functionally, f(1)F(0) ATP synthase produces ATP from ADP in the presence of a proton or sodium gradient. F-type ATPases consist of two structural domains, F(1) containing the extramembraneous catalytic core and F(0) containing the membrane proton channel, linked together by a central stalk and a peripheral stalk. During catalysis, ATP synthesis in the catalytic domain of F(1) is coupled via a rotary mechanism of the central stalk subunits to proton translocation. Its function is as follows. Component of the F(0) channel, it forms part of the peripheral stalk, linking F(1) to F(0). The chain is ATP synthase subunit b from Nocardia farcinica (strain IFM 10152).